The sequence spans 156 residues: MGRFIFLSSGLLVVFLSLSGADFECPSEWRPFDQHCYRAFDEPKRSADAEKFCSEQGNSGHLVSIQSKEEADFVAQLISDNIKSSPDYVWMGLWNQRREQYCSRKWTDGSNVIYKNVAERFTKNCFGLEKETEYRTWLNILCGDDYPFVCKFPPRC.

Residues 1-21 (MGRFIFLSSGLLVVFLSLSGA) form the signal peptide. 3 disulfide bridges follow: Cys-25–Cys-36, Cys-53–Cys-150, and Cys-125–Cys-142. The C-type lectin domain occupies 32 to 151 (FDQHCYRAFD…CGDDYPFVCK (120 aa)).

Belongs to the snaclec family. In terms of assembly, heterodimer; disulfide-linked. As to expression, expressed by the venom gland.

Its subcellular location is the secreted. Functionally, interferes with one step of hemostasis (modulation of platelet aggregation, or coagulation cascade, for example). The sequence is that of Snaclec 2 from Bitis gabonica (Gaboon adder).